A 171-amino-acid polypeptide reads, in one-letter code: Galectin-related protein (171 aa).

Positions 38–170 (PFCGHIKGGM…INGDLQLTKL (133 aa)) constitute a Galectin domain.

Does not bind lactose, and may not bind carbohydrates. This chain is Galectin-related protein (lgalsl), found in Xenopus tropicalis (Western clawed frog).